The chain runs to 37 residues: Hemocyanin subunit B (37 aa).

The protein belongs to the tyrosinase family. Hemocyanin subfamily. Hemolymph.

It is found in the secreted. The protein resides in the extracellular space. Its function is as follows. Hemocyanins are copper-containing oxygen carriers occurring freely dissolved in the hemolymph of many mollusks and arthropods. This Cancer pagurus (Rock crab) protein is Hemocyanin subunit B.